A 245-amino-acid chain; its full sequence is Nodulation protein G (245 aa).

11–35 is an NAD(+) binding site; the sequence is VTGASGGIGEAIARVLHAQGAIVGL. S139 lines the substrate pocket. Y152 (proton acceptor) is an active-site residue.

This sequence belongs to the short-chain dehydrogenases/reductases (SDR) family.

In terms of biological role, proposed to modify Nod factor fatty acyl chain. The polypeptide is Nodulation protein G (nodG) (Rhizobium sp. (strain N33)).